We begin with the raw amino-acid sequence, 62 residues long: Large ribosomal subunit protein bL28 (62 aa).

Positions 1–27 are disordered; that stretch reads MAKECVITGRKSRSGNKRSHAMNSSKR. Positions 10 to 20 are enriched in basic residues; sequence RKSRSGNKRSH.

The protein belongs to the bacterial ribosomal protein bL28 family.

The sequence is that of Large ribosomal subunit protein bL28 from Listeria innocua serovar 6a (strain ATCC BAA-680 / CLIP 11262).